The following is a 420-amino-acid chain: Histidine--tRNA ligase (420 aa).

This sequence belongs to the class-II aminoacyl-tRNA synthetase family. In terms of assembly, homodimer.

It is found in the cytoplasm. The enzyme catalyses tRNA(His) + L-histidine + ATP = L-histidyl-tRNA(His) + AMP + diphosphate + H(+). The polypeptide is Histidine--tRNA ligase (Thermotoga sp. (strain RQ2)).